We begin with the raw amino-acid sequence, 20 residues long: ATP synthase subunit beta, chloroplastic (20 aa).

Residues 1 to 10 (METTNESLGY) are compositionally biased toward polar residues. The segment at 1-20 (METTNESLGYTDQIIGPVLD) is disordered.

This sequence belongs to the ATPase alpha/beta chains family. F-type ATPases have 2 components, CF(1) - the catalytic core - and CF(0) - the membrane proton channel. CF(1) has five subunits: alpha(3), beta(3), gamma(1), delta(1), epsilon(1). CF(0) has four main subunits: a(1), b(1), b'(1) and c(9-12).

It localises to the plastid. It is found in the chloroplast thylakoid membrane. The catalysed reaction is ATP + H2O + 4 H(+)(in) = ADP + phosphate + 5 H(+)(out). Functionally, produces ATP from ADP in the presence of a proton gradient across the membrane. The catalytic sites are hosted primarily by the beta subunits. This is ATP synthase subunit beta, chloroplastic from Chattonella marina var. antiqua (Red tide flagellate).